The sequence spans 151 residues: MNPENWLLLRRVVRFGDTDAAGVMHFHQLFRWCHEAWEESLEQYGLTPAEIFPGSRKSEVTPEVALPIIHCQADFRRPIHSGDALAMELRPERLNPNSFQVHFEFRCEEQIAAHALIRHLAINAKTRHRCALPEGIDRWLEASGVGKIGSI.

Asp19 is an active-site residue.

Belongs to the 4-hydroxybenzoyl-CoA thioesterase family. DHNA-CoA hydrolase subfamily.

The enzyme catalyses 1,4-dihydroxy-2-naphthoyl-CoA + H2O = 1,4-dihydroxy-2-naphthoate + CoA + H(+). It functions in the pathway cofactor biosynthesis; phylloquinone biosynthesis. It participates in quinol/quinone metabolism; 1,4-dihydroxy-2-naphthoate biosynthesis; 1,4-dihydroxy-2-naphthoate from chorismate: step 7/7. Its function is as follows. Catalyzes the hydrolysis of 1,4-dihydroxy-2-naphthoyl-CoA (DHNA-CoA) to 1,4-dihydroxy-2-naphthoate (DHNA), a reaction involved in phylloquinone (vitamin K1) biosynthesis. This Prochlorococcus marinus (strain MIT 9303) protein is 1,4-dihydroxy-2-naphthoyl-CoA hydrolase.